Consider the following 120-residue polypeptide: Large ribosomal subunit protein bL19c (120 aa).

Belongs to the bacterial ribosomal protein bL19 family.

Its subcellular location is the plastid. It localises to the chloroplast. The sequence is that of Large ribosomal subunit protein bL19c from Thalassiosira weissflogii (Marine diatom).